The primary structure comprises 655 residues: MTQKSFPIAPEFLAAANITAEQYAEQYKQSIASPEATDAFWAERAELIDWIKKPTKISDVSYDLEDFRIKWFEDGELNISVNCLDRHVRNNPYKPAIIWEGDHPSLHKIISFKELHEAVCRLGNAMRKLGVKKGDRVTLYMPMIPEAMVAMLACTRIGAVHSVVFGGFSAESLGNRIIDSQSKLVITADEGIRGNKRTPLKANVDRALDMDGTDSVSNVIVVHRTGNSVPMSGRRDIWYHSLVDGESQHCEPEVMNAEDPLFLLYTSGSTGKPKGVLHTTGGYITYALSTFRDVFDIKEDDVYWCTADVGWVTGHTYATYAPLANGTTTVMFEGVPEYPTWARIGHIIDKHQITVLYTAPTAIRAMMKEGDTFVRESDRSSLRLLGTVGEPINPEAWDWYYHVVGGSKCPVVDTWWQTETGGIMLAPIPGTVAMKPGAAMNPLYGIVPEVIDTDGVALEGAAEGNLVINSSWPGQMRTIYQDHARFLTTYFTEYPGYYFTGDGVQRDEDGHYWITGRVDDVLNVSGHRLGTAEIESSIVAHPATAEAAVVGMPHDIRGMGICAFVILKSSETATESLKSELNRHVRSEIGPIANLDAIYMVNVLPKTRSGKIMRRILRSLAAGQYVGLGDLSTLADSSVINELVEVVKTERAKSH.

Residues arginine 193–lysine 196 and threonine 313 contribute to the CoA site. ATP contacts are provided by residues glycine 389–proline 391, aspartate 413–threonine 418, aspartate 502, and arginine 517. Residue serine 525 coordinates CoA. Arginine 528 contacts ATP. Positions 539 and 541 each coordinate Mg(2+). Position 586 (arginine 586) interacts with CoA. Lysine 611 carries the N6-acetyllysine modification.

Belongs to the ATP-dependent AMP-binding enzyme family. It depends on Mg(2+) as a cofactor. Post-translationally, acetylated. Deacetylation by the SIR2-homolog deacetylase activates the enzyme.

The enzyme catalyses acetate + ATP + CoA = acetyl-CoA + AMP + diphosphate. In terms of biological role, catalyzes the conversion of acetate into acetyl-CoA (AcCoA), an essential intermediate at the junction of anabolic and catabolic pathways. AcsA undergoes a two-step reaction. In the first half reaction, AcsA combines acetate with ATP to form acetyl-adenylate (AcAMP) intermediate. In the second half reaction, it can then transfer the acetyl group from AcAMP to the sulfhydryl group of CoA, forming the product AcCoA. The protein is Acetyl-coenzyme A synthetase of Psychrobacter cryohalolentis (strain ATCC BAA-1226 / DSM 17306 / VKM B-2378 / K5).